A 262-amino-acid chain; its full sequence is 14-3-3 protein epsilon (262 aa).

A disordered region spans residues glutamine 236–serine 262. Serine 262 bears the Phosphoserine mark.

Belongs to the 14-3-3 family. Homodimer. Interacts with phosphorylated yki. Interacts with pav (when serine phosphorylated); the interaction is necessary for association of the complex pav-14-3-3epsilon complex to the microtubules, thereby inhibiting microtubule sliding.

Its function is as follows. Positively regulates Ras-mediated pathways. Acts downstream or parallel to Raf, but upstream of nuclear factors in Ras signaling. Three mutants have been isolated, that suppress the rough eye phenotype caused by mutated Ras1 (sev-Ras1 v12). Inhibits yki activity by restricting its nuclear localization. Together with pav, has a role in the inhibition of microtubule sliding during neurite outgrowth. This Drosophila melanogaster (Fruit fly) protein is 14-3-3 protein epsilon (14-3-3epsilon).